The chain runs to 226 residues: Octanoyltransferase (226 aa).

One can recognise a BPL/LPL catalytic domain in the interval 34–212 (LAAPDVLLTL…AFSRVFGLEF (179 aa)). Substrate contacts are provided by residues 76–83 (RGGDVTYH), 143–145 (AIG), and 156–158 (GIA). Cys174 (acyl-thioester intermediate) is an active-site residue.

Belongs to the LipB family.

It localises to the cytoplasm. It carries out the reaction octanoyl-[ACP] + L-lysyl-[protein] = N(6)-octanoyl-L-lysyl-[protein] + holo-[ACP] + H(+). It participates in protein modification; protein lipoylation via endogenous pathway; protein N(6)-(lipoyl)lysine from octanoyl-[acyl-carrier-protein]: step 1/2. Functionally, catalyzes the transfer of endogenously produced octanoic acid from octanoyl-acyl-carrier-protein onto the lipoyl domains of lipoate-dependent enzymes. Lipoyl-ACP can also act as a substrate although octanoyl-ACP is likely to be the physiological substrate. In Thermosynechococcus vestitus (strain NIES-2133 / IAM M-273 / BP-1), this protein is Octanoyltransferase.